The primary structure comprises 664 residues: E3 ubiquitin-protein ligase RNF139 (664 aa).

N-acetylalanine is present on Ala2. 12 helical membrane-spanning segments follow: residues 51 to 71 (IVLQIFLRLFGVFASSIVLIL), 85 to 105 (AFLLAATSVLVNYYASLHIDF), 125 to 145 (SLWMALIVLQLTFGIGYVTLL), 154 to 174 (LIILDLLVPVIGLITELPLHI), 178 to 198 (LLFTSSLILTLNTVFVLAVKL), 293 to 313 (GMSAVISSVAHYLGLGILAFI), 323 to 343 (LGFVAPVLFFILALQTGLSGL), 356 to 376 (MCLLLTAVLHFIHGMTDPVLM), 390 to 410 (FPVLFVSACLFILPVLLSYVL), 420 to 440 (LFAVTAFCVELCLKVIVSLTV), 469 to 489 (SIIEFIFGVVMFGNGAYTMMF), and 495 to 512 (IRAFMMCLHAYFNIYLQA). Residues 547-586 (CAICYHEFTTSARITPCNHYFHALCLRKWLYIQDTCPMCH) form an RING-type; atypical zinc finger. Residues 601 to 664 (VSNNNGFIPP…AAEEFNDDTD (64 aa)) form a disordered region. Positions 616–628 (EAVREAAAESDRE) are enriched in basic and acidic residues. Acidic residues predominate over residues 629–639 (LNEDDSTDCDD). Ser634 is modified (phosphoserine). A phosphothreonine mark is found at Thr635 and Thr663.

In terms of assembly, interacts with MHC class I and HM13. Interacts with VHL. Component of SCAP-SREBP complex composed of SREBF2, SCAP and RNF139; the complex hampers the interaction between SCAP and SEC24B, thereby reducing SREBF2 proteolytic processing. Interacts with SREBF2 (via C-terminal domain). Interacts with SCAP; the interaction inhibits the interaction of SCAP with SEC24B and hampering the ER to Golgi transport of the SCAP-SREBP complex. Interacts with SEC24B. Interacts with INSIG1 and INSIG2. Interacts with EIF3F and EIF3H; the interaction leads to protein translation inhibitions in a ubiquitination-dependent manner. Interacts with XBP1 isoform 1; the interaction induces ubiquitination and degradation of XBP1 isoform 1. Interacts with AUP1, AMFR and UBE2G2; interaction with AUP1 facilitates interaction of RNF139 with ubiquitin-conjugating enzyme UBE2G2 and ubiquitin ligase AMFR/gp78, leading to sterol-induced ubiquitination of HMGCR and its subsequent proteasomal degradation. Autoubiquitinated. Ubiquitination is induced by sterol and leads to ist degradation via the ubiquitin-proteasome pathway. In terms of tissue distribution, highly expressed in testis, placenta and adrenal gland. Moderate expression in heart, brain, liver, skeletal muscle and pancreas, and low expression in lung and kidney.

The protein localises to the endoplasmic reticulum membrane. The catalysed reaction is S-ubiquitinyl-[E2 ubiquitin-conjugating enzyme]-L-cysteine + [acceptor protein]-L-lysine = [E2 ubiquitin-conjugating enzyme]-L-cysteine + N(6)-ubiquitinyl-[acceptor protein]-L-lysine.. It participates in protein modification; protein ubiquitination. E3-ubiquitin ligase; acts as a negative regulator of cell proliferation through mechanisms involving G2/M arrest and cell death. Required for MHC class I ubiquitination in cells expressing the cytomegalovirus protein US2 before dislocation from the endoplasmic reticulum (ER). Affects SREBP processing by hindering the SREBP-SCAP complex translocation from the ER to the Golgi, thereby reducing SREBF2 target gene expression. Involved in the sterol-accelerated degradation of HMGCR. This is achieved through binding of RNF139 to INSIG1 and/or INSIG2 at the ER membrane. In addition, interaction of RNF139 with AUP1 facilitates interaction of RNF139 with ubiquitin-conjugating enzyme UBE2G2 and ubiquitin ligase AMFR, leading to ubiquitination of HMGCR. The ubiquitinated HMGCR is then released from the ER into the cytosol for subsequent destruction. Required for INSIG1 ubiquitination. May be required for EIF3 complex ubiquitination. The sequence is that of E3 ubiquitin-protein ligase RNF139 from Homo sapiens (Human).